The chain runs to 355 residues: Enhancer of mRNA-decapping protein 1 (355 aa).

3 disordered regions span residues 1 to 146, 210 to 230, and 301 to 330; these read MSSD…VDGM, MSQP…SQPM, and NSTA…KSSQ. Over residues 39–49 the composition is skewed to polar residues; the sequence is AQKQQLPNGEQ. The span at 57-67 shows a compositional bias: basic residues; that stretch reads KQSRKRGSGRQ. Over residues 91 to 110 the composition is skewed to polar residues; that stretch reads SIPSGSAGSESAQKETSAGQ. Positions 123–142 are enriched in low complexity; sequence VPAGGPAGKSSSEPASASSA.

Belongs to the EDC family.

It localises to the cytoplasm. Its function is as follows. mRNA-binding protein which stimulates mRNA decapping. This chain is Enhancer of mRNA-decapping protein 1 (EDC1), found in Eremothecium gossypii (strain ATCC 10895 / CBS 109.51 / FGSC 9923 / NRRL Y-1056) (Yeast).